The following is a 482-amino-acid chain: QWRF motif-containing protein 3 (482 aa).

Positions 1 to 20 (MKSCEHELLKTRRGKSREVS) are enriched in basic and acidic residues. 2 disordered regions span residues 1–60 (MKSC…GLKK) and 171–220 (TAKP…QWAL). The segment covering 21–42 (SRFLSSPSASSSPNRRNSTSNS) has biased composition (low complexity). Over residues 191-219 (RTNSSKGIENRLQRNNSVSRYGSSMSQWA) the composition is skewed to polar residues. Residues 292–295 (QWRF) carry the QWRF motif motif.

This sequence belongs to the QWRF family.

This chain is QWRF motif-containing protein 3 (QWRF3), found in Arabidopsis thaliana (Mouse-ear cress).